The following is a 237-amino-acid chain: Uridylate kinase (237 aa).

12 to 15 (KLSG) is an ATP binding site. The segment at 20 to 25 (GDEGFG) is involved in allosteric activation by GTP. Residue Gly-54 coordinates UMP. Residues Gly-55 and Arg-59 each coordinate ATP. Residues Asp-74 and 135–142 (TGSPFFTT) contribute to the UMP site. 3 residues coordinate ATP: Thr-162, Tyr-168, and Asp-171.

It belongs to the UMP kinase family. As to quaternary structure, homohexamer.

It localises to the cytoplasm. The enzyme catalyses UMP + ATP = UDP + ADP. It functions in the pathway pyrimidine metabolism; CTP biosynthesis via de novo pathway; UDP from UMP (UMPK route): step 1/1. Its activity is regulated as follows. Allosterically activated by GTP. Inhibited by UTP. Catalyzes the reversible phosphorylation of UMP to UDP. This chain is Uridylate kinase, found in Haemophilus ducreyi (strain 35000HP / ATCC 700724).